Reading from the N-terminus, the 189-residue chain is Elongation factor P-like protein (189 aa).

Belongs to the elongation factor P family.

This Vibrio atlanticus (strain LGP32) (Vibrio splendidus (strain Mel32)) protein is Elongation factor P-like protein.